Reading from the N-terminus, the 99-residue chain is Prostate and testis expressed protein 14 (99 aa).

Positions 1–21 (MEKYLLLLLLGIFLRVGFLQA) are cleaved as a signal peptide. Residues 22–99 (LTCVSCGRLN…CDHQNLCNKP (78 aa)) enclose the UPAR/Ly6 domain. 5 disulfide bridges follow: Cys24–Cys51, Cys27–Cys36, Cys43–Cys69, Cys73–Cys89, and Cys90–Cys96. An N-linked (GlcNAc...) asparagine glycan is attached at Asn31. A glycan (N-linked (GlcNAc...) asparagine) is linked at Asn75.

The protein belongs to the PATE family. In terms of assembly, monomer. Post-translationally, glycosylated. As to expression, predominantly expressed in the seminal vesicles. Expressed in prostate, and to a lesser extent in the cauda epididymis.

It localises to the secreted. This Mus musculus (Mouse) protein is Prostate and testis expressed protein 14.